Here is a 134-residue protein sequence, read N- to C-terminus: Histone H2A (134 aa).

Gly residues predominate over residues 1 to 11 (MTGGGKSGGKA). The interval 1–25 (MTGGGKSGGKASGSKNAQSRSSKAG) is disordered. An N6-acetyllysine mark is found at K6 and K10. Residue Q107 is modified to N5-methylglutamine. S131 is modified (phosphoserine). The [ST]-Q motif signature appears at 131–132 (SQ).

The protein belongs to the histone H2A family. The nucleosome is a histone octamer containing two molecules each of H2A, H2B, H3 and H4 assembled in one H3-H4 heterotetramer and two H2A-H2B heterodimers. The octamer wraps approximately 147 bp of DNA. Phosphorylated to form H2AS128ph (gamma-H2A) in response to DNA double-strand breaks (DSBs) generated by exogenous genotoxic agents and by stalled replication forks. Phosphorylation is dependent on the DNA damage checkpoint kinases mec-1/ATR and tel-1/ATM, spreads on either side of a detected DSB site and may mark the surrounding chromatin for recruitment of proteins required for DNA damage signaling and repair. Gamma-H2A is removed from the DNA prior to the strand invasion-primer extension step of the repair process and subsequently dephosphorylated. Dephosphorylation is necessary for efficient recovery from the DNA damage checkpoint. In terms of processing, acetylated by esa-1 to form H2AK4ac and H2AK7ac.

Its subcellular location is the nucleus. The protein resides in the chromosome. Functionally, core component of nucleosome which plays a central role in DNA double strand break (DSB) repair. Nucleosomes wrap and compact DNA into chromatin, limiting DNA accessibility to the cellular machineries which require DNA as a template. Histones thereby play a central role in transcription regulation, DNA repair, DNA replication and chromosomal stability. DNA accessibility is regulated via a complex set of post-translational modifications of histones, also called histone code, and nucleosome remodeling. This is Histone H2A (hh2a) from Neurospora crassa (strain ATCC 24698 / 74-OR23-1A / CBS 708.71 / DSM 1257 / FGSC 987).